Here is a 65-residue protein sequence, read N- to C-terminus: MSRSTNKLAVPGAESALDQMKYEIAQEFGVQLGADATARANGSVGGEITKRLVSLAEQQLGGYQK.

The protein belongs to the alpha/beta-type SASP family.

Its function is as follows. SASP are bound to spore DNA. They are double-stranded DNA-binding proteins that cause DNA to change to an a-like conformation. They protect the DNA backbone from chemical and enzymatic cleavage and are thus involved in dormant spore's high resistance to UV light. The polypeptide is Small, acid-soluble spore protein 2 (sasP-2) (Bacillus cereus).